Consider the following 187-residue polypeptide: ATP synthase subunit b (187 aa).

A helical membrane pass occupies residues 31–51 (VAIMGLAIFVLFLILSYLLFN).

It belongs to the ATPase B chain family. In terms of assembly, F-type ATPases have 2 components, F(1) - the catalytic core - and F(0) - the membrane proton channel. F(1) has five subunits: alpha(3), beta(3), gamma(1), delta(1), epsilon(1). F(0) has three main subunits: a(1), b(2) and c(10-14). The alpha and beta chains form an alternating ring which encloses part of the gamma chain. F(1) is attached to F(0) by a central stalk formed by the gamma and epsilon chains, while a peripheral stalk is formed by the delta and b chains.

It is found in the cell membrane. In terms of biological role, f(1)F(0) ATP synthase produces ATP from ADP in the presence of a proton or sodium gradient. F-type ATPases consist of two structural domains, F(1) containing the extramembraneous catalytic core and F(0) containing the membrane proton channel, linked together by a central stalk and a peripheral stalk. During catalysis, ATP synthesis in the catalytic domain of F(1) is coupled via a rotary mechanism of the central stalk subunits to proton translocation. Component of the F(0) channel, it forms part of the peripheral stalk, linking F(1) to F(0). The protein is ATP synthase subunit b of Lachnoclostridium phytofermentans (strain ATCC 700394 / DSM 18823 / ISDg) (Clostridium phytofermentans).